Here is a 205-residue protein sequence, read N- to C-terminus: Putative 3-methyladenine DNA glycosylase (205 aa).

This sequence belongs to the DNA glycosylase MPG family.

The protein is Putative 3-methyladenine DNA glycosylase of Staphylococcus epidermidis (strain ATCC 35984 / DSM 28319 / BCRC 17069 / CCUG 31568 / BM 3577 / RP62A).